The chain runs to 389 residues: SH3 and F-BAR domain-containing protein DDB_G0274695 (389 aa).

One can recognise an F-BAR domain in the interval 3 to 258 (EQFKDNFWGP…VITQIDKLED (256 aa)). Residues 119–192 (KLNKERKDME…QDYRDSVNKL (74 aa)) are a coiled coil. The span at 300–328 (LTSSVSSNSLTSSYNSATTTPTPAPRSTP) shows a compositional bias: low complexity. A disordered region spans residues 300–329 (LTSSVSSNSLTSSYNSATTTPTPAPRSTPI). One can recognise an SH3 domain in the interval 332–389 (SKKKQAKALYDYVGSDATELDFFAGDIITILDEDESGWFRGELGDRIGLYPSNYCEPI).

This Dictyostelium discoideum (Social amoeba) protein is SH3 and F-BAR domain-containing protein DDB_G0274695.